The primary structure comprises 440 residues: Serine protease inhibitor A3G (440 aa).

The tract at residues 357–382 (GTEAAAATGMAGVGCCAVFDFLEIFF) is RCL.

Belongs to the serpin family. In terms of tissue distribution, expressed in bone marrow (particularly hematopoietic stem cells), heart, kidney, liver, lung, skeletal muscle, spleen, testis, thymus and T-cells.

It localises to the cytoplasm. It is found in the nucleus. Its function is as follows. Serine and cysteine protease inhibitor. Can inhibit lysosomal papain-like proteases including the cathepsins B, G, H, K, L and V. Ineffective against elastase, granzyme A, granzyme B, or caspases 3, 8 or 9. Inhibition of cytoplasmic cathepsin B following release from the lysosome may protect cells from apoptosis. This may facilitate the survival of progenitor T-cells and the subsequent development of long term memory CD8 T-cells. The chain is Serine protease inhibitor A3G (Serpina3g) from Mus musculus (Mouse).